We begin with the raw amino-acid sequence, 158 residues long: uncharacterized protein (158 aa).

A compositionally biased stretch (polar residues) spans 1 to 18 (MDLASEITSATQTSSLCS). Disordered stretches follow at residues 1-20 (MDLASEITSATQTSSLCSSG), 66-94 (LRDLSRRGSTSSSRSPSRPVSTSASKPCL), and 111-158 (GSSG…GEEF). Positions 72-90 (RGSTSSSRSPSRPVSTSAS) are enriched in low complexity. Composition is skewed to polar residues over residues 111–120 (GSSGHLQSPG) and 149–158 (LSHSAQGEEF).

This is an uncharacterized protein from Homo sapiens (Human).